Reading from the N-terminus, the 242-residue chain is MTEITDRYFNDVIARLSGLRDRLAAQMEKAADLIAAAARADRRVYVFGTGHSHMMAEELHYRAGGLAITVPILCGSIMLQDGAVASSHFERIEGAVRPILDRYGIRDGDVLVVVSNSGVNAAPIEAARYAREKGAAIIAPTSVAYSNTIARGRTQLLSLADVVLDNDAPSGDAVLEIAGSALKVGPVSTALGVTILNAVFADVAARLVGEGDAPIYLSANMPGSGDINRSLVERYRDRNPHL.

In terms of domain architecture, SIS spans 30–214 (AADLIAAAAR…ARLVGEGDAP (185 aa)).

It belongs to the UPF0309 family.

This chain is UPF0309 protein BSUIS_B0903, found in Brucella suis (strain ATCC 23445 / NCTC 10510).